The following is a 91-amino-acid chain: Cell division protein ZapA (91 aa).

A coiled-coil region spans residues 59–86 (TAVNIANEYLKLKEEYDRLAAKLRREKG).

The protein belongs to the ZapA family. Type 2 subfamily. In terms of assembly, homodimer. Interacts with FtsZ.

Its subcellular location is the cytoplasm. In terms of biological role, activator of cell division through the inhibition of FtsZ GTPase activity, therefore promoting FtsZ assembly into bundles of protofilaments necessary for the formation of the division Z ring. It is recruited early at mid-cell but it is not essential for cell division. This Geobacillus thermodenitrificans (strain NG80-2) protein is Cell division protein ZapA.